The primary structure comprises 371 residues: tRNA-specific 2-thiouridylase MnmA (371 aa).

ATP-binding positions include 13 to 20 (GMSGGVDS) and methionine 39. An interaction with target base in tRNA region spans residues 99–101 (NPD). Cysteine 104 (nucleophile) is an active-site residue. Cysteine 104 and cysteine 200 are oxidised to a cystine. Glycine 128 lines the ATP pocket. Positions 150–152 (KDQ) are interaction with tRNA. Cysteine 200 serves as the catalytic Cysteine persulfide intermediate. An interaction with tRNA region spans residues 308–309 (RY).

Belongs to the MnmA/TRMU family.

The protein localises to the cytoplasm. It catalyses the reaction S-sulfanyl-L-cysteinyl-[protein] + uridine(34) in tRNA + AH2 + ATP = 2-thiouridine(34) in tRNA + L-cysteinyl-[protein] + A + AMP + diphosphate + H(+). Its function is as follows. Catalyzes the 2-thiolation of uridine at the wobble position (U34) of tRNA, leading to the formation of s(2)U34. The polypeptide is tRNA-specific 2-thiouridylase MnmA (Listeria monocytogenes serotype 4b (strain CLIP80459)).